We begin with the raw amino-acid sequence, 163 residues long: Biotin carboxyl carrier protein of acetyl-CoA carboxylase (163 aa).

The region spanning 85–161 (GDFIVSPLVG…QFGSKLFRIV (77 aa)) is the Biotinyl-binding domain. The residue at position 127 (lysine 127) is an N6-biotinyllysine.

As to quaternary structure, homodimer.

It participates in lipid metabolism; fatty acid biosynthesis. Its function is as follows. This protein is a component of the acetyl coenzyme A carboxylase complex; first, biotin carboxylase catalyzes the carboxylation of the carrier protein and then the transcarboxylase transfers the carboxyl group to form malonyl-CoA. The protein is Biotin carboxyl carrier protein of acetyl-CoA carboxylase (accB) of Chlamydia muridarum (strain MoPn / Nigg).